The chain runs to 86 residues: Putative sodium channel toxin Ts17 (86 aa).

Positions Met1–Gly19 are cleaved as a signal peptide. Positions Lys21–Lys82 constitute an LCN-type CS-alpha/beta domain. Disulfide bonds link Cys31–Cys81, Cys35–Cys57, Cys43–Cys64, and Cys47–Cys66. Pro83 carries the post-translational modification Proline amide.

It belongs to the long (4 C-C) scorpion toxin superfamily. Sodium channel inhibitor family. Alpha subfamily. As to expression, expressed by the venom gland.

It is found in the secreted. Alpha toxins bind voltage-independently at site-3 of sodium channels (Nav) and inhibit the inactivation of the activated channels, thereby blocking neuronal transmission. The sequence is that of Putative sodium channel toxin Ts17 from Tityus serrulatus (Brazilian scorpion).